Reading from the N-terminus, the 180-residue chain is NAD(P)H-quinone oxidoreductase subunit I, chloroplastic (180 aa).

4Fe-4S ferredoxin-type domains follow at residues G55–R84 and L95–E124. Residues C64, C67, C70, C74, C104, C107, C110, and C114 each coordinate [4Fe-4S] cluster.

It belongs to the complex I 23 kDa subunit family. NDH is composed of at least 16 different subunits, 5 of which are encoded in the nucleus. Requires [4Fe-4S] cluster as cofactor.

It is found in the plastid. The protein resides in the chloroplast thylakoid membrane. It catalyses the reaction a plastoquinone + NADH + (n+1) H(+)(in) = a plastoquinol + NAD(+) + n H(+)(out). The enzyme catalyses a plastoquinone + NADPH + (n+1) H(+)(in) = a plastoquinol + NADP(+) + n H(+)(out). NDH shuttles electrons from NAD(P)H:plastoquinone, via FMN and iron-sulfur (Fe-S) centers, to quinones in the photosynthetic chain and possibly in a chloroplast respiratory chain. The immediate electron acceptor for the enzyme in this species is believed to be plastoquinone. Couples the redox reaction to proton translocation, and thus conserves the redox energy in a proton gradient. The chain is NAD(P)H-quinone oxidoreductase subunit I, chloroplastic from Chloranthus spicatus (Chulantree).